The sequence spans 689 residues: Elongation factor G (689 aa).

The region spanning 9 to 283 is the tr-type G domain; it reads AKFRNIGIMA…AIVEFMPSPL (275 aa). Residues 18 to 25, 82 to 86, and 136 to 139 each bind GTP; these read AHIDAGKT, DTPGH, and NKMD.

This sequence belongs to the TRAFAC class translation factor GTPase superfamily. Classic translation factor GTPase family. EF-G/EF-2 subfamily.

Its subcellular location is the cytoplasm. Its function is as follows. Catalyzes the GTP-dependent ribosomal translocation step during translation elongation. During this step, the ribosome changes from the pre-translocational (PRE) to the post-translocational (POST) state as the newly formed A-site-bound peptidyl-tRNA and P-site-bound deacylated tRNA move to the P and E sites, respectively. Catalyzes the coordinated movement of the two tRNA molecules, the mRNA and conformational changes in the ribosome. In Clostridium botulinum (strain Kyoto / Type A2), this protein is Elongation factor G.